Consider the following 771-residue polypeptide: 5-methyltetrahydropteroyltriglutamate--homocysteine methyltransferase (771 aa).

5-methyltetrahydropteroyltri-L-glutamate-binding positions include 16–19 (RELK) and lysine 117. L-homocysteine contacts are provided by residues 443–445 (IGS) and glutamate 496. Residues 443-445 (IGS) and glutamate 496 contribute to the L-methionine site. 5-methyltetrahydropteroyltri-L-glutamate is bound by residues 527 to 528 (RC) and tryptophan 573. An L-homocysteine-binding site is contributed by aspartate 611. Aspartate 611 is an L-methionine binding site. Glutamate 617 lines the 5-methyltetrahydropteroyltri-L-glutamate pocket. The Zn(2+) site is built by histidine 653, cysteine 655, and glutamate 677. Residue histidine 706 is the Proton donor of the active site. Residue cysteine 738 coordinates Zn(2+).

This sequence belongs to the vitamin-B12 independent methionine synthase family. Zn(2+) serves as cofactor.

It carries out the reaction 5-methyltetrahydropteroyltri-L-glutamate + L-homocysteine = tetrahydropteroyltri-L-glutamate + L-methionine. Its pathway is amino-acid biosynthesis; L-methionine biosynthesis via de novo pathway; L-methionine from L-homocysteine (MetE route): step 1/1. Catalyzes the transfer of a methyl group from 5-methyltetrahydrofolate to homocysteine resulting in methionine formation. The chain is 5-methyltetrahydropteroyltriglutamate--homocysteine methyltransferase from Stutzerimonas stutzeri (strain A1501) (Pseudomonas stutzeri).